We begin with the raw amino-acid sequence, 767 residues long: Phosphoribosylformylglycinamidine synthase subunit PurL (767 aa).

Histidine 65 is a catalytic residue. Positions 68 and 112 each coordinate ATP. Glutamate 114 serves as a coordination point for Mg(2+). Residues 115–118 and arginine 137 contribute to the substrate site; that span reads SHNH. The active-site Proton acceptor is histidine 116. Position 138 (aspartate 138) interacts with Mg(2+). Glutamine 262 provides a ligand contact to substrate. Aspartate 290 provides a ligand contact to Mg(2+). Position 334-336 (334-336) interacts with substrate; sequence ESQ. Residues aspartate 522 and glycine 559 each contribute to the ATP site. Asparagine 560 serves as a coordination point for Mg(2+). Serine 562 provides a ligand contact to substrate.

Belongs to the FGAMS family. In terms of assembly, monomer. Part of the FGAM synthase complex composed of 1 PurL, 1 PurQ and 2 PurS subunits.

Its subcellular location is the cytoplasm. It carries out the reaction N(2)-formyl-N(1)-(5-phospho-beta-D-ribosyl)glycinamide + L-glutamine + ATP + H2O = 2-formamido-N(1)-(5-O-phospho-beta-D-ribosyl)acetamidine + L-glutamate + ADP + phosphate + H(+). It functions in the pathway purine metabolism; IMP biosynthesis via de novo pathway; 5-amino-1-(5-phospho-D-ribosyl)imidazole from N(2)-formyl-N(1)-(5-phospho-D-ribosyl)glycinamide: step 1/2. Functionally, part of the phosphoribosylformylglycinamidine synthase complex involved in the purines biosynthetic pathway. Catalyzes the ATP-dependent conversion of formylglycinamide ribonucleotide (FGAR) and glutamine to yield formylglycinamidine ribonucleotide (FGAM) and glutamate. The FGAM synthase complex is composed of three subunits. PurQ produces an ammonia molecule by converting glutamine to glutamate. PurL transfers the ammonia molecule to FGAR to form FGAM in an ATP-dependent manner. PurS interacts with PurQ and PurL and is thought to assist in the transfer of the ammonia molecule from PurQ to PurL. The polypeptide is Phosphoribosylformylglycinamidine synthase subunit PurL (Renibacterium salmoninarum (strain ATCC 33209 / DSM 20767 / JCM 11484 / NBRC 15589 / NCIMB 2235)).